The sequence spans 335 residues: Ubiquinone biosynthesis protein COQ4, mitochondrial (335 aa).

Residues 1–10 constitute a mitochondrion transit peptide; that stretch reads MLRLSLLRST. Zn(2+) contacts are provided by H210, D211, H214, and E226.

It belongs to the COQ4 family. Component of a multi-subunit COQ enzyme complex, composed of at least COQ3, COQ4, COQ5, COQ6, COQ7 and COQ9. Interacts with COQ3. The cofactor is Zn(2+).

It is found in the mitochondrion inner membrane. It catalyses the reaction 4-hydroxy-3-methoxy-5-(all-trans-hexaprenyl)benzoate + H(+) = 2-methoxy-6-(all-trans-hexaprenyl)phenol + CO2. The protein operates within cofactor biosynthesis; ubiquinone biosynthesis. In terms of biological role, lyase that catalyzes the C1-decarboxylation of 4-hydroxy-3-methoxy-5-(all-trans-hexaprenyl)benzoic acid into 2-methoxy-6-(all-trans-hexaprenyl)phenol during ubiquinone biosynthesis. This Saccharomyces cerevisiae (strain RM11-1a) (Baker's yeast) protein is Ubiquinone biosynthesis protein COQ4, mitochondrial.